The following is a 372-amino-acid chain: Lipoyl synthase, mitochondrial (372 aa).

Residues Cys-103, Cys-108, Cys-114, Cys-134, Cys-138, Cys-141, and Ser-349 each contribute to the [4Fe-4S] cluster site. In terms of domain architecture, Radical SAM core spans 119–338 (EHGTQTATIM…EERGNQLGFL (220 aa)).

It belongs to the radical SAM superfamily. Lipoyl synthase family. The cofactor is [4Fe-4S] cluster.

The protein localises to the mitochondrion. The enzyme catalyses [[Fe-S] cluster scaffold protein carrying a second [4Fe-4S](2+) cluster] + N(6)-octanoyl-L-lysyl-[protein] + 2 oxidized [2Fe-2S]-[ferredoxin] + 2 S-adenosyl-L-methionine + 4 H(+) = [[Fe-S] cluster scaffold protein] + N(6)-[(R)-dihydrolipoyl]-L-lysyl-[protein] + 4 Fe(3+) + 2 hydrogen sulfide + 2 5'-deoxyadenosine + 2 L-methionine + 2 reduced [2Fe-2S]-[ferredoxin]. It functions in the pathway protein modification; protein lipoylation via endogenous pathway; protein N(6)-(lipoyl)lysine from octanoyl-[acyl-carrier-protein]: step 2/2. In terms of biological role, catalyzes the radical-mediated insertion of two sulfur atoms into the C-6 and C-8 positions of the octanoyl moiety bound to the lipoyl domains of lipoate-dependent enzymes, thereby converting the octanoylated domains into lipoylated derivatives. The sequence is that of Lipoyl synthase, mitochondrial from Drosophila willistoni (Fruit fly).